A 256-amino-acid polypeptide reads, in one-letter code: uncharacterized protein (256 aa).

Residues 201–214 show a composition bias toward basic and acidic residues; sequence ACKEGVDSSCKEEG. The segment at 201–231 is disordered; sequence ACKEGVDSSCKEEGGGCEEEGSGSEEDSDDS. The span at 215–231 shows a compositional bias: acidic residues; that stretch reads GGCEEEGSGSEEDSDDS.

It localises to the mitochondrion. This is an uncharacterized protein from Zea mays (Maize).